We begin with the raw amino-acid sequence, 885 residues long: Initiator protein NS1 (885 aa).

The tract at residues 404-477 (AEAGPSGTQP…GREDIFSGAP (74 aa)) is disordered. The segment covering 409-423 (SGTQPVETAQQSPPT) has biased composition (polar residues). The span at 452-465 (QAAGGSEMGAGGSA) shows a compositional bias: gly residues.

It belongs to the parvoviruses initiator protein NS1 family. As to quaternary structure, homooligomer. Requires Mg(2+) as cofactor.

The protein resides in the host nucleus. The enzyme catalyses ATP + H2O = ADP + phosphate + H(+). Multifunctional protein which displays endonuclease and helicase activities required for initiating and directing viral DNA replication. Also plays a role in viral packaging and transactivation of several promoters. Binds site-specifically to 2-3 approximate tandem copies within the origins of replication (Ori), unwinds this hairpin region and nicks one DNA strand thereby initiating the rolling circle replication (RCR). This chain is Initiator protein NS1, found in Bombyx mori densovirus (BmDNV).